Here is a 410-residue protein sequence, read N- to C-terminus: Platelet-activating factor acetylhydrolase IB subunit alpha (410 aa).

The interval 1–38 is required for self-association and interaction with PAFAH1B2 and PAFAH1B3; the sequence is MVLSQRQRDELNRAIADYLRSNGYEEAYSVFKKEAELD. Residues 1 to 66 are interaction with NDE1; it reads MVLSQRQRDE…SVIRLQKKVM (66 aa). The tract at residues 1-102 is interaction with NDEL1; that stretch reads MVLSQRQRDE…EWIPRPPEKY (102 aa). In terms of domain architecture, LisH spans 7 to 39; the sequence is QRDELNRAIADYLRSNGYEEAYSVFKKEAELDM. Lys53 carries the N6-acetyllysine modification. Residues 56–82 are a coiled coil; it reads TSVIRLQKKVMELESKLNEAKEEFTSG. The tract at residues 83–410 is interaction with dynein and dynactin; sequence GPLGQKRDPK…DQTVKVWECR (328 aa). WD repeat units follow at residues 106–147, 148–187, 190–229, 232–271, 274–333, 336–377, and 378–410; these read GHRS…RTLK, GHTDSVQDISFDHSGKLLTSCSADMTIKLWDFQGFECIRT, GHDHNVSSVAIMPNGDHLVSASRDKTIKMWEVQTGYCVKT, GHREWVRMVRPNQDGTLIASCSNDQTVRVWVVATKECKAE, EHEH…CLMT, GHDN…KTLN, and AHEHFVTSLDFHKTAPYVVTGSVDQTVKVWECR. Ser109 is modified (phosphoserine). The interval 367–409 is interaction with DCX; the sequence is YKNKRCMKTLNAHEHFVTSLDFHKTAPYVVTGSVDQTVKVWEC. Residues 388–410 form an interaction with NDEL1 region; it reads FHKTAPYVVTGSVDQTVKVWECR.

The protein belongs to the WD repeat LIS1/nudF family. As to quaternary structure, can self-associate. Component of the cytosolic PAF-AH (I) heterotetrameric enzyme, which is composed of PAFAH1B1 (beta), PAFAH1B2 (alpha2) and PAFAH1B3 (alpha1) subunits. The catalytic activity of the enzyme resides in the alpha1 (PAFAH1B3) and alpha2 (PAFAH1B2) subunits, whereas the beta subunit (PAFAH1B1) has regulatory activity. Trimer formation is not essential for the catalytic activity. Interacts with the catalytic dimer of PAF-AH (I) heterotetrameric enzyme: interacts with PAFAH1B2 homodimer (alpha2/alpha2 homodimer), PAFAH1B3 homodimer (alpha1/alpha1 homodimer) and PAFAH1B2-PAFAH1B3 heterodimer (alpha2/alpha1 heterodimer). Interacts with DCX, dynein, dynactin, IQGAP1, KATNB1, NDE1, NDEL1, NUDC and RSN. Interacts with DISC1, and this interaction is enhanced by NDEL1. Interacts with DAB1 when DAB1 is phosphorylated in response to RELN/reelin signaling. Interacts with INTS13. Interacts with DCDC1.

The protein localises to the cytoplasm. It is found in the cytoskeleton. The protein resides in the microtubule organizing center. Its subcellular location is the centrosome. It localises to the spindle. The protein localises to the nucleus membrane. Functionally, regulatory subunit (beta subunit) of the cytosolic type I platelet-activating factor (PAF) acetylhydrolase (PAF-AH (I)), an enzyme that catalyzes the hydrolyze of the acetyl group at the sn-2 position of PAF and its analogs and participates in PAF inactivation. Regulates the PAF-AH (I) activity in a catalytic dimer composition-dependent manner. Positively regulates the activity of the minus-end directed microtubule motor protein dynein. May enhance dynein-mediated microtubule sliding by targeting dynein to the microtubule plus end. Required for several dynein- and microtubule-dependent processes such as the maintenance of Golgi integrity, the peripheral transport of microtubule fragments and the coupling of the nucleus and centrosome. Required during brain development for the proliferation of neuronal precursors and the migration of newly formed neurons from the ventricular/subventricular zone toward the cortical plate. Neuronal migration involves a process called nucleokinesis, whereby migrating cells extend an anterior process into which the nucleus subsequently translocates. During nucleokinesis dynein at the nuclear surface may translocate the nucleus towards the centrosome by exerting force on centrosomal microtubules. Also required for proper activation of Rho GTPases and actin polymerization at the leading edge of locomoting cerebellar neurons and postmigratory hippocampal neurons in response to calcium influx triggered via NMDA receptors. May also play a role in other forms of cell locomotion including the migration of fibroblasts during wound healing. Required for dynein recruitment to microtubule plus ends and BICD2-bound cargos. May modulate the Reelin pathway through interaction of the PAF-AH (I) catalytic dimer with VLDLR. The sequence is that of Platelet-activating factor acetylhydrolase IB subunit alpha from Macaca fascicularis (Crab-eating macaque).